Consider the following 83-residue polypeptide: RNA-binding protein Hfq (83 aa).

In terms of domain architecture, Sm spans 10 to 70; it reads DTFLNQVRKE…ISTVMPLRPI (61 aa).

This sequence belongs to the Hfq family. As to quaternary structure, homohexamer.

Its function is as follows. RNA chaperone that binds small regulatory RNA (sRNAs) and mRNAs to facilitate mRNA translational regulation in response to envelope stress, environmental stress and changes in metabolite concentrations. Also binds with high specificity to tRNAs. In Desulfitobacterium hafniense (strain DSM 10664 / DCB-2), this protein is RNA-binding protein Hfq.